The sequence spans 338 residues: 1-aminocyclopropane-1-carboxylate deaminase (338 aa).

Position 51 is an N6-(pyridoxal phosphate)lysine (Lys-51). The active-site Nucleophile is Ser-78.

Belongs to the ACC deaminase/D-cysteine desulfhydrase family. As to quaternary structure, homotrimer. Requires pyridoxal 5'-phosphate as cofactor.

It catalyses the reaction 1-aminocyclopropane-1-carboxylate + H2O = 2-oxobutanoate + NH4(+). Catalyzes a cyclopropane ring-opening reaction, the irreversible conversion of 1-aminocyclopropane-1-carboxylate (ACC) to ammonia and alpha-ketobutyrate. Allows growth on ACC as a nitrogen source. In Pseudomonas syringae pv. syringae (strain B728a), this protein is 1-aminocyclopropane-1-carboxylate deaminase.